Here is a 207-residue protein sequence, read N- to C-terminus: Guanylate kinase (207 aa).

The Guanylate kinase-like domain maps to glycine 6 to glutamate 185. An ATP-binding site is contributed by glycine 13–glycine 20.

Belongs to the guanylate kinase family.

The protein localises to the cytoplasm. It carries out the reaction GMP + ATP = GDP + ADP. Its function is as follows. Essential for recycling GMP and indirectly, cGMP. This Staphylococcus aureus (strain bovine RF122 / ET3-1) protein is Guanylate kinase.